Here is a 148-residue protein sequence, read N- to C-terminus: Lysozyme C (148 aa).

An N-terminal signal peptide occupies residues 1-18 (MKALIVLGLVLLSVMVQG). One can recognise a C-type lysozyme domain in the interval 19–148 (KVFERCELAR…VRQYVQGCGV (130 aa)). Cystine bridges form between C24–C146, C48–C134, C83–C99, and C95–C113. Catalysis depends on residues E53 and D71.

Belongs to the glycosyl hydrolase 22 family. Monomer.

It catalyses the reaction Hydrolysis of (1-&gt;4)-beta-linkages between N-acetylmuramic acid and N-acetyl-D-glucosamine residues in a peptidoglycan and between N-acetyl-D-glucosamine residues in chitodextrins.. In terms of biological role, lysozymes have primarily a bacteriolytic function; those in tissues and body fluids are associated with the monocyte-macrophage system and enhance the activity of immunoagents. This chain is Lysozyme C (LYZ), found in Gorilla gorilla gorilla (Western lowland gorilla).